The chain runs to 201 residues: Superoxide dismutase [Fe] (201 aa).

Fe cation-binding residues include histidine 27, histidine 79, aspartate 161, and histidine 165.

It belongs to the iron/manganese superoxide dismutase family. In terms of assembly, homodimer. It depends on Fe cation as a cofactor.

The enzyme catalyses 2 superoxide + 2 H(+) = H2O2 + O2. Its function is as follows. Destroys superoxide anion radicals which are normally produced within the cells and which are toxic to biological systems. The polypeptide is Superoxide dismutase [Fe] (sodB) (Synechococcus elongatus (strain ATCC 33912 / PCC 7942 / FACHB-805) (Anacystis nidulans R2)).